The following is a 50-amino-acid chain: uncharacterized protein (50 aa).

The chain crosses the membrane as a helical span at residues 5-19 (IIIIVIVIIIFFFYL). The stretch at 19–50 (LKQKKLTNCETQVVKVQKDIDEINLKLKKLNK) forms a coiled coil.

Its subcellular location is the membrane. This is an uncharacterized protein from Acheta domesticus (House cricket).